The sequence spans 190 residues: UPF0301 protein RSc0675 (190 aa).

The protein belongs to the UPF0301 (AlgH) family.

The chain is UPF0301 protein RSc0675 from Ralstonia nicotianae (strain ATCC BAA-1114 / GMI1000) (Ralstonia solanacearum).